Here is a 353-residue protein sequence, read N- to C-terminus: Keratocan (353 aa).

The signal sequence occupies residues 1-21 (MMTLKVCPSLLLLFLVHSVWT). An LRRNT domain is found at 34-72 (EHWSHYTFECPQECFCPPSFPNALYCDNKGLKEIPAIPA). Intrachain disulfides connect cysteine 43/cysteine 49 and cysteine 47/cysteine 59. LRR repeat units follow at residues 73 to 94 (RIWY…PFVN), 97 to 118 (HLRW…SGVL), 123 to 143 (RLLY…PLPV), 144 to 165 (GLEQ…VFSN), 168 to 188 (NLTM…QSDT), 194 to 214 (SLMQ…SIPA), 215 to 236 (NTLQ…YFSA), 239 to 262 (KVTF…GFNV), 264 to 283 (SILD…PINA), and 284 to 305 (HLEH…QICP). N-linked (GlcNAc...) (keratan sulfate) asparagine glycosylation occurs at asparagine 94. A glycan (N-linked (GlcNAc...) asparagine) is linked at asparagine 168. Asparagine 223 and asparagine 261 each carry an N-linked (GlcNAc...) (keratan sulfate) asparagine glycan. An N-linked (GlcNAc...) asparagine glycan is attached at asparagine 299. A disulfide bond links cysteine 304 and cysteine 344.

Belongs to the small leucine-rich proteoglycan (SLRP) family. SLRP class II subfamily. In terms of processing, binds keratan sulfate chains.

Its subcellular location is the secreted. It localises to the extracellular space. The protein localises to the extracellular matrix. Plays an important role in generating and maintaining a transparent matrix within the corneal stroma. This Gallus gallus (Chicken) protein is Keratocan (KERA).